Here is a 166-residue protein sequence, read N- to C-terminus: Large ribosomal subunit protein uL18c (166 aa).

Residues 1–44 constitute a chloroplast transit peptide; sequence MAAATSLSFFHSTLASSSSSSVQQLSLPPKFVNFRPQTLPLIQA.

This sequence belongs to the universal ribosomal protein uL18 family. Component of the chloroplast large ribosomal subunit (LSU). Mature 70S chloroplast ribosomes of higher plants consist of a small (30S) and a large (50S) subunit. The 30S small subunit contains 1 molecule of ribosomal RNA (16S rRNA) and 24 different proteins. The 50S large subunit contains 3 rRNA molecules (23S, 5S and 4.5S rRNA) and 33 different proteins.

The protein localises to the plastid. Its subcellular location is the chloroplast. Its function is as follows. Component of the chloroplast ribosome (chloro-ribosome), a dedicated translation machinery responsible for the synthesis of chloroplast genome-encoded proteins, including proteins of the transcription and translation machinery and components of the photosynthetic apparatus. The protein is Large ribosomal subunit protein uL18c (RPL18) of Spinacia oleracea (Spinach).